A 328-amino-acid chain; its full sequence is Serine protease 27 (328 aa).

A signal peptide spans 1-22 (MRQPHITALLLLPLLLRSGTEG). A propeptide spans 23 to 37 (AEAMRACGHPRMFNR) (activation peptide). The Peptidase S1 domain occupies 38 to 280 (MVGGEDALEG…HYQWIHQIIP (243 aa)). A disulfide bond links C63 and C79. The active-site Charge relay system is the H78. An N-linked (GlcNAc...) asparagine glycan is attached at N82. D127 acts as the Charge relay system in catalysis. 3 disulfide bridges follow: C161–C238, C194–C217, and C228–C256. S232 serves as the catalytic Charge relay system.

The protein belongs to the peptidase S1 family.

It localises to the secreted. The polypeptide is Serine protease 27 (Prss27) (Rattus norvegicus (Rat)).